The primary structure comprises 385 residues: 1-deoxy-D-xylulose 5-phosphate reductoisomerase (385 aa).

Residues T10, G11, I13, G36, and N38 each coordinate NADPH. A 1-deoxy-D-xylulose 5-phosphate-binding site is contributed by K123. E124 provides a ligand contact to NADPH. D148 is a binding site for Mn(2+). Positions 149, 150, 172, and 195 each coordinate 1-deoxy-D-xylulose 5-phosphate. Residue E150 coordinates Mn(2+). Residue G201 participates in NADPH binding. 1-deoxy-D-xylulose 5-phosphate-binding residues include S208, N213, K214, and E217. E217 provides a ligand contact to Mn(2+).

Belongs to the DXR family. Mg(2+) is required as a cofactor. The cofactor is Mn(2+).

It catalyses the reaction 2-C-methyl-D-erythritol 4-phosphate + NADP(+) = 1-deoxy-D-xylulose 5-phosphate + NADPH + H(+). It functions in the pathway isoprenoid biosynthesis; isopentenyl diphosphate biosynthesis via DXP pathway; isopentenyl diphosphate from 1-deoxy-D-xylulose 5-phosphate: step 1/6. Catalyzes the NADPH-dependent rearrangement and reduction of 1-deoxy-D-xylulose-5-phosphate (DXP) to 2-C-methyl-D-erythritol 4-phosphate (MEP). In Anaplasma phagocytophilum (strain HZ), this protein is 1-deoxy-D-xylulose 5-phosphate reductoisomerase.